A 215-amino-acid chain; its full sequence is uncharacterized protein (215 aa).

Residues serine 114, aspartate 162, and histidine 194 each act as charge relay system in the active site.

It belongs to the AB hydrolase superfamily. AB hydrolase 2 family.

This is an uncharacterized protein from Rickettsia felis (strain ATCC VR-1525 / URRWXCal2) (Rickettsia azadi).